The chain runs to 646 residues: Autophagy-related protein 28 (646 aa).

Disordered stretches follow at residues 1–148 (MSSP…HVDN) and 221–245 (PTRSTPDGNVIPVRQPVSNKPRGLK). Polar residues predominate over residues 12 to 21 (SPRQRLSNPL). The segment covering 63 to 75 (SATSTRRSSSPAS) has biased composition (low complexity). Over residues 106–122 (MMMNQHPSRQSTVSSHG) the composition is skewed to polar residues. 2 coiled-coil regions span residues 283-350 (LDKM…MEDV) and 485-514 (QQAAMQSQLSEMDDVVQELQKRLQLAESKH). 2 disordered regions span residues 475–494 (SQAGDADEEPQQAAMQSQLS) and 546–612 (AAAV…RGSA). 2 stretches are compositionally biased toward basic and acidic residues: residues 557 to 575 (STDKAEGTSQEERADSHDE) and 588 to 597 (RMEDHDHDPP).

It belongs to the ATG28 family.

It is found in the cytoplasm. It localises to the vacuole membrane. Its subcellular location is the cytoplasmic vesicle membrane. Functionally, required for the autophagic degradation of peroxisomes called pexophagy, but not essential for general autophagy. Involved in resistance to elevated pH. The polypeptide is Autophagy-related protein 28 (Gibberella zeae (strain ATCC MYA-4620 / CBS 123657 / FGSC 9075 / NRRL 31084 / PH-1) (Wheat head blight fungus)).